We begin with the raw amino-acid sequence, 355 residues long: Cobalt-precorrin-5B C(1)-methyltransferase (355 aa).

The protein belongs to the CbiD family.

It carries out the reaction Co-precorrin-5B + S-adenosyl-L-methionine = Co-precorrin-6A + S-adenosyl-L-homocysteine. It participates in cofactor biosynthesis; adenosylcobalamin biosynthesis; cob(II)yrinate a,c-diamide from sirohydrochlorin (anaerobic route): step 6/10. Its function is as follows. Catalyzes the methylation of C-1 in cobalt-precorrin-5B to form cobalt-precorrin-6A. The sequence is that of Cobalt-precorrin-5B C(1)-methyltransferase from Parasynechococcus marenigrum (strain WH8102).